Consider the following 340-residue polypeptide: Dihydroorotase (340 aa).

The Zn(2+) site is built by H14 and H16. Residues 16-18 and N42 contribute to the substrate site; that span reads HLR. Residues K100, H137, and H175 each contribute to the Zn(2+) site. K100 carries the N6-carboxylysine modification. Substrate is bound at residue H137. Position 220 (L220) interacts with substrate. D248 contacts Zn(2+). D248 is a catalytic residue. H252 and A264 together coordinate substrate.

This sequence belongs to the metallo-dependent hydrolases superfamily. DHOase family. Class II DHOase subfamily. Homodimer. Requires Zn(2+) as cofactor.

The catalysed reaction is (S)-dihydroorotate + H2O = N-carbamoyl-L-aspartate + H(+). Its pathway is pyrimidine metabolism; UMP biosynthesis via de novo pathway; (S)-dihydroorotate from bicarbonate: step 3/3. In terms of biological role, catalyzes the reversible cyclization of carbamoyl aspartate to dihydroorotate. The polypeptide is Dihydroorotase (Sphingopyxis alaskensis (strain DSM 13593 / LMG 18877 / RB2256) (Sphingomonas alaskensis)).